The following is an 89-amino-acid chain: Small ribosomal subunit protein uS15 (89 aa).

This sequence belongs to the universal ribosomal protein uS15 family. As to quaternary structure, part of the 30S ribosomal subunit. Forms a bridge to the 50S subunit in the 70S ribosome, contacting the 23S rRNA.

In terms of biological role, one of the primary rRNA binding proteins, it binds directly to 16S rRNA where it helps nucleate assembly of the platform of the 30S subunit by binding and bridging several RNA helices of the 16S rRNA. Forms an intersubunit bridge (bridge B4) with the 23S rRNA of the 50S subunit in the ribosome. The sequence is that of Small ribosomal subunit protein uS15 from Thermomicrobium roseum (strain ATCC 27502 / DSM 5159 / P-2).